The sequence spans 417 residues: NADH-quinone oxidoreductase subunit D 2 (417 aa).

This sequence belongs to the complex I 49 kDa subunit family. As to quaternary structure, NDH-1 is composed of 14 different subunits. Subunits NuoB, C, D, E, F, and G constitute the peripheral sector of the complex.

Its subcellular location is the cell membrane. It catalyses the reaction a quinone + NADH + 5 H(+)(in) = a quinol + NAD(+) + 4 H(+)(out). Functionally, NDH-1 shuttles electrons from NADH, via FMN and iron-sulfur (Fe-S) centers, to quinones in the respiratory chain. The immediate electron acceptor for the enzyme in this species is believed to be ubiquinone. Couples the redox reaction to proton translocation (for every two electrons transferred, four hydrogen ions are translocated across the cytoplasmic membrane), and thus conserves the redox energy in a proton gradient. The protein is NADH-quinone oxidoreductase subunit D 2 of Roseiflexus sp. (strain RS-1).